We begin with the raw amino-acid sequence, 343 residues long: Insertion element IS630 uncharacterized 39 kDa protein (343 aa).

The protein is Insertion element IS630 uncharacterized 39 kDa protein of Shigella sonnei.